The sequence spans 563 residues: Arginine--tRNA ligase (563 aa).

The 'HIGH' region motif lies at 121–131 (PNIAKPFSIGH).

This sequence belongs to the class-I aminoacyl-tRNA synthetase family. In terms of assembly, monomer.

The protein localises to the cytoplasm. The enzyme catalyses tRNA(Arg) + L-arginine + ATP = L-arginyl-tRNA(Arg) + AMP + diphosphate. This Streptococcus pneumoniae (strain CGSP14) protein is Arginine--tRNA ligase.